The sequence spans 232 residues: Ribose-5-phosphate isomerase A (232 aa).

Residues 28-31 (TGST), 83-86 (DGAD), and 96-99 (KGGG) each bind substrate. Glu-105 acts as the Proton acceptor in catalysis. Lys-123 is a binding site for substrate.

Belongs to the ribose 5-phosphate isomerase family. As to quaternary structure, homodimer.

It carries out the reaction aldehydo-D-ribose 5-phosphate = D-ribulose 5-phosphate. The protein operates within carbohydrate degradation; pentose phosphate pathway; D-ribose 5-phosphate from D-ribulose 5-phosphate (non-oxidative stage): step 1/1. Its function is as follows. Catalyzes the reversible conversion of ribose-5-phosphate to ribulose 5-phosphate. The polypeptide is Ribose-5-phosphate isomerase A (Rhizobium etli (strain ATCC 51251 / DSM 11541 / JCM 21823 / NBRC 15573 / CFN 42)).